The chain runs to 85 residues: DNA-directed RNA polymerase subunit beta'' (85 aa).

This sequence belongs to the RNA polymerase beta' chain family. RpoC2 subfamily. In plastids the minimal PEP RNA polymerase catalytic core is composed of four subunits: alpha, beta, beta', and beta''. When a (nuclear-encoded) sigma factor is associated with the core the holoenzyme is formed, which can initiate transcription.

The protein localises to the plastid. The protein resides in the chloroplast. The catalysed reaction is RNA(n) + a ribonucleoside 5'-triphosphate = RNA(n+1) + diphosphate. In terms of biological role, DNA-dependent RNA polymerase catalyzes the transcription of DNA into RNA using the four ribonucleoside triphosphates as substrates. This is DNA-directed RNA polymerase subunit beta'' (rpoC2) from Galdieria sulphuraria (Red alga).